The sequence spans 144 residues: Large ribosomal subunit protein uL15 (144 aa).

The interval 1-59 is disordered; the sequence is MRLNTISPAEGSKPTGKRSGRGIGSGLGKTGGVGHKGQKSRSGGRVKPGFEGGQMPIQR. Residues 21-35 show a composition bias toward gly residues; it reads RGIGSGLGKTGGVGH.

Belongs to the universal ribosomal protein uL15 family. Part of the 50S ribosomal subunit.

Functionally, binds to the 23S rRNA. The sequence is that of Large ribosomal subunit protein uL15 from Alteromonas mediterranea (strain DSM 17117 / CIP 110805 / LMG 28347 / Deep ecotype).